Consider the following 500-residue polypeptide: Serine/threonine-protein phosphatase 2A 56 kDa regulatory subunit beta isoform (500 aa).

A compositionally biased stretch (low complexity) spans 1–19 (METKLPPASTPTSPSSPGL). Disordered regions lie at residues 1 to 55 (METK…YQSN) and 474 to 500 (GTQGTQGAREAPLQRFVPQVAATGGQS). 6 positions are modified to phosphoserine; by CLK2: Ser-32, Ser-35, Ser-44, Ser-46, Ser-47, and Ser-48. The span at 34-45 (RSLRRARPRRSH) shows a compositional bias: basic residues.

Belongs to the phosphatase 2A regulatory subunit B56 family. In terms of assembly, component of the serine/threonine-protein phosphatase 2A complex (PP2A). This complex consists of a common heterodimeric core enzyme, composed of a 36 kDa catalytic subunit (subunit C) and a 65 kDa constant scaffold subunit (PR65 or subunit A), that associates with a variety of regulatory subunits. Proteins that associate with the core dimer include three families of regulatory subunits B (the R2/B/PR55/B55, R3/B''/PR72/PR130/PR59 and R5/B'/B56 families), the 48 kDa variable regulatory subunit, viral proteins, and cell signaling molecules. Interacts with SGO1. Interacts with AKT1. As to expression, highly expressed in brain.

Its subcellular location is the nucleus. Its function is as follows. As the regulatory component of the serine/threonine-protein phosphatase 2A (PP2A) holoenzyme, modulates substrate specificity, subcellular localization, and responsiveness to phosphorylation. The phosphorylated form mediates the interaction between PP2A and AKT1, leading to AKT1 dephosphorylation. The sequence is that of Serine/threonine-protein phosphatase 2A 56 kDa regulatory subunit beta isoform (PPP2R5B) from Oryctolagus cuniculus (Rabbit).